Here is a 59-residue protein sequence, read N- to C-terminus: Ferredoxin-2 (59 aa).

4Fe-4S ferredoxin-type domains follow at residues 3 to 32 (YSVI…LQNG) and 33 to 59 (KAVP…AIVE). Residues cysteine 12, cysteine 15, cysteine 18, cysteine 22, cysteine 42, cysteine 45, cysteine 48, and cysteine 52 each coordinate [4Fe-4S] cluster.

In terms of assembly, homodimer. It depends on [4Fe-4S] cluster as a cofactor.

Its subcellular location is the periplasm. Its function is as follows. Ferredoxins are iron-sulfur proteins that transfer electrons in a wide variety of metabolic reactions. The sequence is that of Ferredoxin-2 from Desulfomicrobium norvegicum (strain DSM 1741 / NCIMB 8310) (Desulfovibrio baculatus (strain Norway 4)).